The sequence spans 100 residues: NAD(P)H-quinone oxidoreductase subunit 4L, chloroplastic (100 aa).

The next 3 membrane-spanning stretches (helical) occupy residues 1 to 21 (MIENALILGAYLFCIGFYGLI), 29 to 49 (ALMCLELIFNAVNINFVTFSN), and 63 to 83 (ISVIAIAAAEAAIGLSIILII).

The protein belongs to the complex I subunit 4L family. NDH is composed of at least 16 different subunits, 5 of which are encoded in the nucleus.

The protein resides in the plastid. Its subcellular location is the chloroplast thylakoid membrane. The enzyme catalyses a plastoquinone + NADH + (n+1) H(+)(in) = a plastoquinol + NAD(+) + n H(+)(out). It carries out the reaction a plastoquinone + NADPH + (n+1) H(+)(in) = a plastoquinol + NADP(+) + n H(+)(out). Functionally, NDH shuttles electrons from NAD(P)H:plastoquinone, via FMN and iron-sulfur (Fe-S) centers, to quinones in the photosynthetic chain and possibly in a chloroplast respiratory chain. The immediate electron acceptor for the enzyme in this species is believed to be plastoquinone. Couples the redox reaction to proton translocation, and thus conserves the redox energy in a proton gradient. This chain is NAD(P)H-quinone oxidoreductase subunit 4L, chloroplastic, found in Angiopteris evecta (Mule's foot fern).